The chain runs to 376 residues: Phosphate-binding protein (376 aa).

2 disulfide bridges follow: Cys-113–Cys-158 and Cys-306–Cys-369.

In terms of assembly, heterooligomer with human PON1. Found in human plasma.

It localises to the secreted. Its function is as follows. Phosphate-binding protein. The sequence is that of Phosphate-binding protein from Unknown prokaryotic organism.